Consider the following 356-residue polypeptide: Dihydroorotate dehydrogenase (quinone) (356 aa).

FMN is bound by residues 67–71 (PGFDK) and Thr91. Residue Lys71 participates in substrate binding. Residue 116-120 (NRMGF) coordinates substrate. FMN is bound by residues Asn147 and Asn178. Asn178 contacts substrate. The active-site Nucleophile is the Ser181. Asn183 contributes to the substrate binding site. Residues Lys218 and Ser246 each coordinate FMN. 247–248 (NT) serves as a coordination point for substrate. FMN contacts are provided by residues Gly268, Gly297, and 318–319 (YS).

Belongs to the dihydroorotate dehydrogenase family. Type 2 subfamily. As to quaternary structure, monomer. FMN serves as cofactor.

The protein resides in the cell membrane. The enzyme catalyses (S)-dihydroorotate + a quinone = orotate + a quinol. It functions in the pathway pyrimidine metabolism; UMP biosynthesis via de novo pathway; orotate from (S)-dihydroorotate (quinone route): step 1/1. In terms of biological role, catalyzes the conversion of dihydroorotate to orotate with quinone as electron acceptor. The protein is Dihydroorotate dehydrogenase (quinone) of Sphingopyxis alaskensis (strain DSM 13593 / LMG 18877 / RB2256) (Sphingomonas alaskensis).